Here is a 555-residue protein sequence, read N- to C-terminus: Glucose-6-phosphate isomerase (555 aa).

The active-site Proton donor is the Glu-355. Residues His-386 and Lys-514 contribute to the active site.

This sequence belongs to the GPI family.

The protein localises to the cytoplasm. The enzyme catalyses alpha-D-glucose 6-phosphate = beta-D-fructose 6-phosphate. The protein operates within carbohydrate biosynthesis; gluconeogenesis. It functions in the pathway carbohydrate degradation; glycolysis; D-glyceraldehyde 3-phosphate and glycerone phosphate from D-glucose: step 2/4. Functionally, catalyzes the reversible isomerization of glucose-6-phosphate to fructose-6-phosphate. The sequence is that of Glucose-6-phosphate isomerase from Buchnera aphidicola subsp. Schizaphis graminum (strain Sg).